Consider the following 90-residue polypeptide: uncharacterized protein (90 aa).

This sequence belongs to the barstar family.

This is an uncharacterized protein from Escherichia coli O157:H7.